The chain runs to 604 residues: uncharacterized protein (604 aa).

Residues 1 to 19 (MIVRILLLFIALFTFGVQA) form the signal peptide.

The protein to H.influenzae HbpA.

This is an uncharacterized protein from Escherichia coli (strain K12).